We begin with the raw amino-acid sequence, 134 residues long: Arginine decarboxylase proenzyme (134 aa).

Serine 82 functions as the Schiff-base intermediate with substrate; via pyruvic acid in the catalytic mechanism. At serine 82 the chain carries Pyruvic acid (Ser); by autocatalysis. Histidine 87 (proton acceptor; for processing activity) is an active-site residue. Cysteine 102 (proton donor; for catalytic activity) is an active-site residue.

This sequence belongs to the prokaryotic AdoMetDC family. Type 1 subfamily. In terms of assembly, heterooctamer of four alpha and four beta chains arranged as a tetramer of alpha/beta heterodimers. Requires pyruvate as cofactor. Post-translationally, is synthesized initially as an inactive proenzyme. Formation of the active enzyme involves a self-maturation process in which the active site pyruvoyl group is generated from an internal serine residue via an autocatalytic post-translational modification. Two non-identical subunits are generated from the proenzyme in this reaction, and the pyruvate is formed at the N-terminus of the alpha chain, which is derived from the carboxyl end of the proenzyme. The post-translation cleavage follows an unusual pathway, termed non-hydrolytic serinolysis, in which the side chain hydroxyl group of the serine supplies its oxygen atom to form the C-terminus of the beta chain, while the remainder of the serine residue undergoes an oxidative deamination to produce ammonia and the pyruvoyl group blocking the N-terminus of the alpha chain.

It carries out the reaction L-arginine + H(+) = agmatine + CO2. The protein operates within amine and polyamine biosynthesis; agmatine biosynthesis; agmatine from L-arginine: step 1/1. Its function is as follows. Specifically catalyzes the decarboxylation of L-arginine to agmatine. Has no S-adenosylmethionine decarboxylase (AdoMetDC) activity. The sequence is that of Arginine decarboxylase proenzyme from Saccharolobus islandicus (strain M.16.4 / Kamchatka #3) (Sulfolobus islandicus).